A 297-amino-acid chain; its full sequence is Phosphoribosylaminoimidazole-succinocarboxamide synthase (297 aa).

This sequence belongs to the SAICAR synthetase family.

It catalyses the reaction 5-amino-1-(5-phospho-D-ribosyl)imidazole-4-carboxylate + L-aspartate + ATP = (2S)-2-[5-amino-1-(5-phospho-beta-D-ribosyl)imidazole-4-carboxamido]succinate + ADP + phosphate + 2 H(+). Its pathway is purine metabolism; IMP biosynthesis via de novo pathway; 5-amino-1-(5-phospho-D-ribosyl)imidazole-4-carboxamide from 5-amino-1-(5-phospho-D-ribosyl)imidazole-4-carboxylate: step 1/2. The sequence is that of Phosphoribosylaminoimidazole-succinocarboxamide synthase from Methylobacillus flagellatus (strain ATCC 51484 / DSM 6875 / VKM B-1610 / KT).